Consider the following 391-residue polypeptide: Phosphopentomutase (391 aa).

Residues D12, D285, H290, D326, H327, and H338 each coordinate Mn(2+).

Belongs to the phosphopentomutase family. It depends on Mn(2+) as a cofactor.

Its subcellular location is the cytoplasm. It catalyses the reaction 2-deoxy-alpha-D-ribose 1-phosphate = 2-deoxy-D-ribose 5-phosphate. The catalysed reaction is alpha-D-ribose 1-phosphate = D-ribose 5-phosphate. It functions in the pathway carbohydrate degradation; 2-deoxy-D-ribose 1-phosphate degradation; D-glyceraldehyde 3-phosphate and acetaldehyde from 2-deoxy-alpha-D-ribose 1-phosphate: step 1/2. Isomerase that catalyzes the conversion of deoxy-ribose 1-phosphate (dRib-1-P) and ribose 1-phosphate (Rib-1-P) to deoxy-ribose 5-phosphate (dRib-5-P) and ribose 5-phosphate (Rib-5-P), respectively. The sequence is that of Phosphopentomutase from Herpetosiphon aurantiacus (strain ATCC 23779 / DSM 785 / 114-95).